Reading from the N-terminus, the 262-residue chain is Type II restriction enzyme HinfI (262 aa).

It carries out the reaction Endonucleolytic cleavage of DNA to give specific double-stranded fragments with terminal 5'-phosphates.. A P subtype restriction enzyme that recognizes the double-stranded sequence 5'-GANTC-3' and cleaves after G-1. The protein is Type II restriction enzyme HinfI (hinfIR) of Haemophilus influenzae.